A 512-amino-acid polypeptide reads, in one-letter code: MEFSTKALDWSKAGQNGFLATKTDCLVVGLFEGQNLAGVAKALDVATKGLVGRLVKQGDFEGKRGTQLMLHEVAGVGAARVLLVGLGKEADFSDKAFADAVRTAVRALSSTRAASALWCLAQQAPQQRDVAWAVITTITLVREAGYRLLERHPGLKRANANGKPNGNDKSSLRKVVIAVDTGNARAATQAVVRGTAIANGMELTRDLGNLPSNICTPTYLANTARGIAKRHKLKAEVLGRKQIEALNMGAFLAVTKGSEEPPQFIVLRYDGAGAKQAPVVLVGKGITFDTGGISLKPGEGMDEMKYDMCGAASVLGTIQAVAEMGLKLNVIAVVPTCENMPSGIATKPGDVVTSMSGQTIEILNTDAEGRLILCDALTYVERFKPAAVIDVATLTGACIIALGHINSGLYARSDALADALLQAGRRAMDTAWRMPLDDEYQDQLKSNFADMGNIGGRPAGSVTAACFLSRFTEKYDWAHLDIAGTAWKSGAAKGATGRPVPLLAQFLMDRAA.

Mn(2+) is bound by residues Lys-284 and Asp-289. Lys-296 is a catalytic residue. 3 residues coordinate Mn(2+): Asp-307, Asp-366, and Glu-368. Residue Arg-370 is part of the active site.

This sequence belongs to the peptidase M17 family. Mn(2+) serves as cofactor.

The protein localises to the cytoplasm. The enzyme catalyses Release of an N-terminal amino acid, Xaa-|-Yaa-, in which Xaa is preferably Leu, but may be other amino acids including Pro although not Arg or Lys, and Yaa may be Pro. Amino acid amides and methyl esters are also readily hydrolyzed, but rates on arylamides are exceedingly low.. It carries out the reaction Release of an N-terminal amino acid, preferentially leucine, but not glutamic or aspartic acids.. Presumably involved in the processing and regular turnover of intracellular proteins. Catalyzes the removal of unsubstituted N-terminal amino acids from various peptides. This Cupriavidus necator (strain ATCC 17699 / DSM 428 / KCTC 22496 / NCIMB 10442 / H16 / Stanier 337) (Ralstonia eutropha) protein is Probable cytosol aminopeptidase.